The following is a 195-amino-acid chain: ATP-dependent Clp protease proteolytic subunit (195 aa).

Serine 97 acts as the Nucleophile in catalysis. Histidine 122 is a catalytic residue.

The protein belongs to the peptidase S14 family. In terms of assembly, fourteen ClpP subunits assemble into 2 heptameric rings which stack back to back to give a disk-like structure with a central cavity, resembling the structure of eukaryotic proteasomes.

Its subcellular location is the cytoplasm. The catalysed reaction is Hydrolysis of proteins to small peptides in the presence of ATP and magnesium. alpha-casein is the usual test substrate. In the absence of ATP, only oligopeptides shorter than five residues are hydrolyzed (such as succinyl-Leu-Tyr-|-NHMec, and Leu-Tyr-Leu-|-Tyr-Trp, in which cleavage of the -Tyr-|-Leu- and -Tyr-|-Trp bonds also occurs).. Its function is as follows. Cleaves peptides in various proteins in a process that requires ATP hydrolysis. Has a chymotrypsin-like activity. Plays a major role in the degradation of misfolded proteins. In Lactobacillus acidophilus (strain ATCC 700396 / NCK56 / N2 / NCFM), this protein is ATP-dependent Clp protease proteolytic subunit.